A 105-amino-acid chain; its full sequence is Ferredoxin--nitrite reductase, chloroplastic (105 aa).

[4Fe-4S] cluster contacts are provided by Cys28 and Cys32. Cys32 contacts siroheme.

It belongs to the nitrite and sulfite reductase 4Fe-4S domain family. As to quaternary structure, monomer. It depends on siroheme as a cofactor. The cofactor is [4Fe-4S] cluster. Highest expression in roots and hypocotyls. Some expression in cotyledonary whorls.

It is found in the plastid. It localises to the chloroplast. The catalysed reaction is 6 oxidized [2Fe-2S]-[ferredoxin] + NH4(+) + 2 H2O = nitrite + 6 reduced [2Fe-2S]-[ferredoxin] + 8 H(+). It functions in the pathway nitrogen metabolism; nitrate reduction (assimilation). The sequence is that of Ferredoxin--nitrite reductase, chloroplastic (NIR) from Pinus sylvestris (Scotch pine).